Consider the following 408-residue polypeptide: Acetylornithine aminotransferase (408 aa).

Residues 107–108 (GT) and Phe-141 each bind pyridoxal 5'-phosphate. Arg-144 contacts N(2)-acetyl-L-ornithine. A pyridoxal 5'-phosphate-binding site is contributed by 227–230 (DEIQ). Position 256 is an N6-(pyridoxal phosphate)lysine (Lys-256). Thr-284 is a binding site for N(2)-acetyl-L-ornithine. Residue Thr-285 coordinates pyridoxal 5'-phosphate.

It belongs to the class-III pyridoxal-phosphate-dependent aminotransferase family. ArgD subfamily. In terms of assembly, homodimer. Pyridoxal 5'-phosphate serves as cofactor.

Its subcellular location is the cytoplasm. The enzyme catalyses N(2)-acetyl-L-ornithine + 2-oxoglutarate = N-acetyl-L-glutamate 5-semialdehyde + L-glutamate. The protein operates within amino-acid biosynthesis; L-arginine biosynthesis; N(2)-acetyl-L-ornithine from L-glutamate: step 4/4. This chain is Acetylornithine aminotransferase, found in Xanthomonas axonopodis pv. citri (strain 306).